We begin with the raw amino-acid sequence, 189 residues long: MRGAGGALAVAVAALLVCCSADPHQEGDVSGSDHNTAERYDAAGQKTRTLDTLGGNLVREVREIRHSGYVPYLISRRFDFASPYGGKREPWPLAPIEFSGYYGDGLPKRNFDEIDRSGLDTFVKKRNFDEIDRSSMPFPYATKRFYHLSSFDKKRYRADYPMDEIDLSHFPIGSKRSQDSYPLLPRNLL.

The signal sequence occupies residues 1 to 21 (MRGAGGALAVAVAALLVCCSA). 2 consecutive propeptides follow at residues 22-124 (DPHQ…TFVK) and 145-174 (FYHL…PIGS).

It belongs to the orcokinin family. As to expression, orcokinin-like peptide: Expressed in corpora cardiaca (CC), corpora allata (CA), antennal lobe (AL) and gnathal ganglion (GNG) (at protein level). Expression in CC, CA and GNG detected in some animals, in AL in few animals (at protein level). Orcokinin-like peptide precursor-related peptide: Expressed in corpora cardiaca (CC), corpora allata (CA), antennal lobe (AL) and gnathal ganglion (GNG) (at protein level). Expression in GNG detected in most animals, expression in CC, CA and AL detected in some animals (at protein level).

It is found in the secreted. Functionally, myotropic peptides. The sequence is that of Orcokinin peptides from Agrotis ipsilon (Black cutworm moth).